The chain runs to 296 residues: 4-hydroxybenzoate octaprenyltransferase (296 aa).

Transmembrane regions (helical) follow at residues 28–48 (PIGIYLLLWPTLWAVWIAGKG), 52–72 (LNTVFIFVAGVFLMRAAGCVI), 102–122 (ALVLFAVLVSLSFVLVLFTNS), 123–140 (TTIWLSFGGLALAACYPF), 146–166 (YYPQVVLGAAFSWGMPMAFTA), 169–189 (GELPAAAWLLYIANLLWTVGY), 219–239 (VIILSLQGLALGCLALAGSRF), 241–261 (LGAFFYMGLLVAAACFAWEFW), and 275–295 (FLHNHWAGLAIFLGIVADYAL).

The protein belongs to the UbiA prenyltransferase family. The cofactor is Mg(2+).

The protein resides in the cell inner membrane. It carries out the reaction all-trans-octaprenyl diphosphate + 4-hydroxybenzoate = 4-hydroxy-3-(all-trans-octaprenyl)benzoate + diphosphate. It functions in the pathway cofactor biosynthesis; ubiquinone biosynthesis. Functionally, catalyzes the prenylation of para-hydroxybenzoate (PHB) with an all-trans polyprenyl group. Mediates the second step in the final reaction sequence of ubiquinone-8 (UQ-8) biosynthesis, which is the condensation of the polyisoprenoid side chain with PHB, generating the first membrane-bound Q intermediate 3-octaprenyl-4-hydroxybenzoate. The protein is 4-hydroxybenzoate octaprenyltransferase of Pseudomonas syringae pv. tomato (strain ATCC BAA-871 / DC3000).